We begin with the raw amino-acid sequence, 369 residues long: IST1-like protein (369 aa).

The stretch at 12–59 forms a coiled coil; the sequence is KLKVQLKLAVSRIQILKNKKANIVRDEKRNVAELLRKKNEESARIRVE. Positions 224–354 are disordered; sequence QIIQQQQQPQ…SSDTGYPDYD (131 aa). Composition is skewed to low complexity over residues 225–239 and 246–270; these read IIQQQQQPQMPSFPI and PTFSQIQHQQQIQQQYQQQQQSPQF. Over residues 277 to 305 the composition is skewed to polar residues; the sequence is FYNNNSGNQTPQFPTISTNNSDGYSNDKF. Positions 306–337 are enriched in low complexity; that stretch reads NNGNNNYNNNNNNNNNNNNNNNHNNNNNNNNN.

This sequence belongs to the IST1 family.

This chain is IST1-like protein, found in Dictyostelium discoideum (Social amoeba).